A 162-amino-acid polypeptide reads, in one-letter code: NADH-quinone oxidoreductase subunit I (162 aa).

4Fe-4S ferredoxin-type domains lie at 52 to 82 and 93 to 122; these read LRRYPNGEERCIACKLCEAVCPAQAITIEAG and VRYDIDMVKCIYCGLCQEACPVDAIVEGPN. Residues cysteine 62, cysteine 65, cysteine 68, cysteine 72, cysteine 102, cysteine 105, cysteine 108, and cysteine 112 each coordinate [4Fe-4S] cluster.

The protein belongs to the complex I 23 kDa subunit family. NDH-1 is composed of 14 different subunits. Subunits NuoA, H, J, K, L, M, N constitute the membrane sector of the complex. [4Fe-4S] cluster is required as a cofactor.

It is found in the cell inner membrane. It carries out the reaction a quinone + NADH + 5 H(+)(in) = a quinol + NAD(+) + 4 H(+)(out). Functionally, NDH-1 shuttles electrons from NADH, via FMN and iron-sulfur (Fe-S) centers, to quinones in the respiratory chain. The immediate electron acceptor for the enzyme in this species is believed to be ubiquinone. Couples the redox reaction to proton translocation (for every two electrons transferred, four hydrogen ions are translocated across the cytoplasmic membrane), and thus conserves the redox energy in a proton gradient. This chain is NADH-quinone oxidoreductase subunit I, found in Bradyrhizobium sp. (strain ORS 278).